A 756-amino-acid polypeptide reads, in one-letter code: Xylosyl- and glucuronyltransferase LARGE1 (756 aa).

At 1–10 (MLGICRGRRK) the chain is on the cytoplasmic side. The helical; Signal-anchor for type II membrane protein transmembrane segment at 11 to 31 (FLAASLTVLFVPAVTWIYLFA) threads the bilayer. The Lumenal portion of the chain corresponds to 32 to 756 (GSFEDGKPVS…LKYLTAENNS (725 aa)). 2 disordered regions span residues 42-63 (LSPL…RDRE) and 81-109 (KQLS…EGTG). The span at 44-58 (PLESQPHSPRYTASS) shows a compositional bias: polar residues. Residues 55-90 (TASSQRDRESLEVRMREVEEENRVLRKQLSLAQGRS) adopt a coiled-coil conformation. N-linked (GlcNAc...) asparagine glycans are attached at residues Asn-97, Asn-122, and Asn-148. The interval 138–413 (IHVAIVCAGY…FLEYDGNLLR (276 aa)) is xylosyltransferase activity. Asp-242 and Asp-244 together coordinate Mn(2+). A glycan (N-linked (GlcNAc...) asparagine) is linked at Asn-272. The tract at residues 414–756 (RELFGCPSEA…LKYLTAENNS (343 aa)) is glucuronyltransferase activity. Mn(2+)-binding residues include Asp-563 and Asp-565.

In the C-terminal section; belongs to the glycosyltransferase 49 family. This sequence in the N-terminal section; belongs to the glycosyltransferase 8 family. Mn(2+) serves as cofactor.

It is found in the golgi apparatus membrane. The catalysed reaction is 3-O-[beta-D-GlcA-(1-&gt;3)-beta-D-Xyl-(1-&gt;4)-Rib-ol-P-Rib-ol-P-3-beta-D-GalNAc-(1-&gt;3)-beta-D-GlcNAc-(1-&gt;4)-(O-6-P-alpha-D-Man)]-Thr-[protein] + UDP-alpha-D-xylose = 3-O-[alpha-D-Xyl-(1-&gt;3)-beta-D-GlcA-(1-&gt;4)-beta-D-Xyl-(1-&gt;4)-Rib-ol-P-Rib-ol-P-3-beta-D-GalNAc-(1-&gt;3)-beta-D-GlcNAc-(1-&gt;4)-(O-6-P-alpha-D-Man)]-Thr-[protein] + UDP + H(+). The enzyme catalyses 3-O-{(1-&gt;[3)-alpha-D-Xyl-(1-&gt;3)-beta-D-GlcA-(1-&gt;](n)-4)-beta-D-Xyl-(1-&gt;4)-Rib-ol-P-Rib-ol-P-3-beta-D-GalNAc-(1-&gt;3)-beta-D-GlcNAc-(1-&gt;4)-O-6-P-alpha-D-Man}-L-Thr-[protein] + UDP-alpha-D-glucuronate = 3-O-{beta-D-GlcA-(1-&gt;[3)-alpha-D-Xyl-(1-&gt;3)-beta-D-GlcA-(1-&gt;](n)-4)-beta-D-Xyl-(1-&gt;4)-Rib-ol-P-Rib-ol-P-3-beta-D-GalNAc-(1-&gt;3)-beta-D-GlcNAc-(1-&gt;4)-O-6-P-alpha-D-Man}-L-Thr-[protein] + UDP + H(+). It catalyses the reaction 3-O-{beta-D-GlcA-(1-&gt;[3)-alpha-D-Xyl-(1-&gt;3)-beta-D-GlcA-(1-&gt;](n)-4)-beta-D-Xyl-(1-&gt;4)-Rib-ol-P-Rib-ol-P-3-beta-D-GalNAc-(1-&gt;3)-beta-D-GlcNAc-(1-&gt;4)-O-6-P-alpha-D-Man}-L-Thr-[protein] + UDP-alpha-D-xylose = 3-O-{(1-&gt;[3)-alpha-D-Xyl-(1-&gt;3)-beta-D-GlcA-(1-&gt;](n+1)-4)-beta-D-Xyl-(1-&gt;4)-Rib-ol-P-Rib-ol-P-3-beta-D-GalNAc-(1-&gt;3)-beta-D-GlcNAc-(1-&gt;4)-O-6-P-alpha-D-Man}-L-Thr-[protein] + UDP + H(+). The protein operates within protein modification; protein glycosylation. In terms of biological role, bifunctional glycosyltransferase with both alpha-1,3-xylosyltransferase and beta-1,3-glucuronyltransferase activities involved in the maturation of alpha-dystroglycan (DAG1) by glycosylation leading to DAG1 binding to laminin G-like domain-containing extracellular proteins with high affinity. Elongates the glucuronyl-beta-1,4-xylose-beta disaccharide primer structure initiated by B4GAT1 by adding repeating units [-3-Xylose-alpha-1,3-GlcA-beta-1-] to produce a heteropolysaccharide. Requires the phosphorylation of core M3 (O-mannosyl trisaccharide) by POMK to elongate the glucuronyl-beta-1,4-xylose-beta disaccharide primer. Plays a key role in skeletal muscle function and regeneration. This chain is Xylosyl- and glucuronyltransferase LARGE1, found in Gallus gallus (Chicken).